We begin with the raw amino-acid sequence, 279 residues long: Pleckstrin homology domain-containing family F member 1 (279 aa).

The region spanning 35-131 (VLLGEGVLTK…WISHIEECVR (97 aa)) is the PH domain. Residues 152–212 (DKATDICMRC…VCSLCYRELA (61 aa)) form an FYVE-type zinc finger. Residues C158, C161, C175, C178, C183, C186, C204, and C207 each coordinate Zn(2+). A disordered region spans residues 220-263 (AREGIGGSPPQLSHLGGTVCGASSGDDDDSDEDREGNGDGDWPT). A compositionally biased stretch (acidic residues) spans 244 to 253 (GDDDDSDEDR).

In terms of tissue distribution, widely expressed.

The protein resides in the nucleus. It localises to the cytoplasm. The protein localises to the perinuclear region. It is found in the lysosome. Its function is as follows. May induce apoptosis through the lysosomal-mitochondrial pathway. Translocates to the lysosome initiating the permeabilization of lysosomal membrane (LMP) and resulting in the release of CTSD and CTSL to the cytoplasm. Triggers the caspase-independent apoptosis by altering mitochondrial membrane permeabilization (MMP) resulting in the release of PDCD8. The protein is Pleckstrin homology domain-containing family F member 1 (Plekhf1) of Mus musculus (Mouse).